The primary structure comprises 170 residues: Large ribosomal subunit protein uL5 (170 aa).

The protein belongs to the universal ribosomal protein uL5 family. In terms of assembly, part of the 50S ribosomal subunit; contacts the 5S rRNA and probably tRNA. Forms a bridge to the 30S subunit in the 70S ribosome.

Its function is as follows. This is one of the proteins that bind and probably mediate the attachment of the 5S RNA into the large ribosomal subunit, where it forms part of the central protuberance. In the 70S ribosome it contacts protein S13 of the 30S subunit (bridge B1b), connecting the 2 subunits; this bridge is implicated in subunit movement. May contact the P site tRNA; the 5S rRNA and some of its associated proteins might help stabilize positioning of ribosome-bound tRNAs. The polypeptide is Large ribosomal subunit protein uL5 (Thermoplasma volcanium (strain ATCC 51530 / DSM 4299 / JCM 9571 / NBRC 15438 / GSS1)).